The primary structure comprises 217 residues: Phosphatidylcholine synthase (217 aa).

Residues 1–8 form a helical membrane-spanning segment; the sequence is ACIGVFSL. Residues 9–16 lie on the Periplasmic side of the membrane; that stretch reads VKIYQHEY. Residues 17–37 traverse the membrane as a helical segment; that stretch reads IFALWLMFITVVIDAVDGTLA. Residues 38 to 50 lie on the Cytoplasmic side of the membrane; sequence RLVNIKKILPKID. The chain crosses the membrane as a helical span at residues 51–71; it reads GALLDNIVDYLNYVITPCFFL. The Periplasmic segment spans residues 72 to 77; it reads LVKPGM. Residues 78 to 98 form a helical membrane-spanning segment; sequence LPPEYSVFLIAAVSITSAYQF. The Cytoplasmic segment spans residues 99 to 107; that stretch reads CQCDAKTPD. Residues 108–128 form a helical membrane-spanning segment; sequence HFFKGFPCYWNITILYMFIFN. Thr-129 is a topological domain (periplasmic). A helical membrane pass occupies residues 130–149; sequence SAATNAIILIILSILIFVPV. Residues 150–164 lie on the Cytoplasmic side of the membrane; it reads KYVYPSRLDYLTESR. The chain crosses the membrane as a helical span at residues 165–185; the sequence is ILKILMHICSIIYAVSSICIL. Residues 186-191 are Periplasmic-facing; sequence ISYPNT. A helical membrane pass occupies residues 192–212; that stretch reads NIICLSLSVAYVGMYLFLSFY. Over 213–217 the chain is Cytoplasmic; it reads RTYYP.

The protein belongs to the CDP-alcohol phosphatidyltransferase class-I family. It depends on Mn(2+) as a cofactor.

The protein resides in the cell inner membrane. It catalyses the reaction a CDP-1,2-diacyl-sn-glycerol + choline = a 1,2-diacyl-sn-glycero-3-phosphocholine + CMP + H(+). Functionally, condenses choline with CDP-diglyceride to produce phosphatidylcholine and CMP. This is Phosphatidylcholine synthase from Legionella bozemanae (Fluoribacter bozemanae).